A 345-amino-acid polypeptide reads, in one-letter code: Beta-2-glycoprotein 1 (345 aa).

Positions Met1–Ala19 are cleaved as a signal peptide. 4 Sushi domains span residues Arg21–Pro81, Arg82–Arg139, Val140–Glu202, and Val203–Ala262. Intrachain disulfides connect Cys23-Cys66, Cys51-Cys79, Cys84-Cys124, Cys110-Cys137, Cys142-Cys188, Cys174-Cys200, Cys205-Cys248, Cys234-Cys260, Cys264-Cys315, Cys300-Cys325, and Cys307-Cys345. Thr33 carries an O-linked (GalNAc...) threonine glycan. Residues Asn117, Asn162, Asn183, and Asn193 are each glycosylated (N-linked (GlcNAc...) asparagine). Asn253 carries N-linked (GlcNAc...) asparagine glycosylation. The interval Ser263–Cys345 is sushi-like.

Expressed by the liver and secreted in plasma.

Its subcellular location is the secreted. Functionally, binds to various kinds of negatively charged substances such as heparin, phospholipids, and dextran sulfate. May prevent activation of the intrinsic blood coagulation cascade by binding to phospholipids on the surface of damaged cells. The protein is Beta-2-glycoprotein 1 (APOH) of Canis lupus familiaris (Dog).